The sequence spans 359 residues: Type-1 angiotensin II receptor (359 aa).

At 1-25 the chain is on the extracellular side; it reads MILNSSTEDGIKRIQDDCPKAGRHN. The N-linked (GlcNAc...) asparagine glycan is linked to asparagine 4. Positions 15 and 17 each coordinate angiotensin II. Cystine bridges form between cysteine 18–cysteine 274 and cysteine 101–cysteine 180. A helical transmembrane segment spans residues 26–55; sequence YIFVMIPTLYSIIFVVGIFGNSLVVIVIYF. The Cytoplasmic portion of the chain corresponds to 56-61; the sequence is YMKLKT. A helical membrane pass occupies residues 62–89; the sequence is VASVFLLNLALADLCFLLTLPLWAVYTA. The Extracellular portion of the chain corresponds to 90-98; the sequence is MEYRWPFGN. A helical transmembrane segment spans residues 99-125; that stretch reads YLCKIASASVSFNLYASVFLLTCLSID. Topologically, residues 126–141 are cytoplasmic; sequence RYVAIVHPMKSPVRRT. Residues 142-165 traverse the membrane as a helical segment; the sequence is MLMAKVTCIIIWLLAGLASLPTII. The Extracellular portion of the chain corresponds to 166-190; that stretch reads HRNVFFIENTNITVCAFHYESQNST. Arginine 167 is an angiotensin II binding site. The N-linked (GlcNAc...) asparagine glycan is linked to asparagine 176. Positions 182, 183, and 184 each coordinate angiotensin II. N-linked (GlcNAc...) asparagine glycosylation occurs at asparagine 188. The chain crosses the membrane as a helical span at residues 191–216; it reads LPIGLGLTKNILGFLFPFLIILTSYT. Lysine 199 lines the angiotensin II pocket. At 217 to 239 the chain is on the cytoplasmic side; that stretch reads LIWKTLKRAYEIQKNKPRNDDIF. A helical transmembrane segment spans residues 240–268; the sequence is KIIMAIVLFFFFSWVPHQIFTFLDVLIQL. Residues 269–278 are Extracellular-facing; that stretch reads GIIHDCKIAD. A helical membrane pass occupies residues 279–304; it reads IVDTAMPITICIAYFNNCLNPLFYGF. The Cytoplasmic segment spans residues 305 to 359; sequence LGKKFKKYFLQLLKYIPPKAKSHSSLSTKMSTLSYRPSDHGNASTKKSASCVEVE. A compositionally biased stretch (polar residues) spans 335–352; that stretch reads STLSYRPSDHGNASTKKS. Residues 335-359 are disordered; the sequence is STLSYRPSDHGNASTKKSASCVEVE. The S-palmitoyl cysteine moiety is linked to residue cysteine 355.

This sequence belongs to the G-protein coupled receptor 1 family. In terms of assembly, interacts with MAS1. Interacts with ARRB1. Interacts with FLNA (via filamin repeat 21); increases PKA-mediated phosphorylation of FLNA. In terms of processing, C-terminal Ser or Thr residues may be phosphorylated. Adrenal, liver, aorta, kidney, lung, testis and heart.

Its subcellular location is the cell membrane. Receptor for angiotensin II, a vasoconstricting peptide, which acts as a key regulator of blood pressure and sodium retention by the kidney. The activated receptor in turn couples to G-alpha proteins G(q) (GNAQ, GNA11, GNA14 or GNA15) and thus activates phospholipase C and increases the cytosolic Ca(2+) concentrations, which in turn triggers cellular responses such as stimulation of protein kinase C. This is Type-1 angiotensin II receptor (AGTR1) from Canis lupus familiaris (Dog).